The following is a 545-amino-acid chain: Gamma-curcumene synthase (545 aa).

4 residues coordinate Mg(2+): D299, D303, N442, and E450. The short motif at 299–303 (DDTYD) is the DDXXD motif element.

It belongs to the terpene synthase family. Mg(2+) serves as cofactor.

It localises to the cytoplasm. It is found in the cytosol. It catalyses the reaction (2E,6E)-farnesyl diphosphate = gamma-curcumene + diphosphate. Its pathway is secondary metabolite biosynthesis; terpenoid biosynthesis. Functionally, sesquiterpene synthase involved in gamma-curcumene biosynthesis. The protein is Gamma-curcumene synthase of Pogostemon cablin (Patchouli).